Consider the following 314-residue polypeptide: Oxaloacetate tautomerase FAHD2B, mitochondrial (314 aa).

Residues 1-84 constitute a mitochondrion transit peptide; the sequence is MLGSSGRRLL…ATLSVVRRAL (84 aa). Residues Glu159, Glu161, and Asp190 each contribute to the Mg(2+) site. Lys203 bears the N6-acetyllysine; alternate mark. Lys203 is modified (N6-succinyllysine; alternate). Lys234 bears the N6-acetyllysine mark.

Belongs to the FAH family. It depends on Mg(2+) as a cofactor. Requires Mn(2+) as cofactor.

The protein resides in the mitochondrion. It carries out the reaction oxaloacetate = enol-oxaloacetate. Tautomerase that converts enol-oxaloacetate, a strong inhibitor of succinate dehydrogenase, to the physiological keto form of oxaloacetate. It is thereby required to maximize aerobic respiration efficiency by preventing succinate dehydrogenase inhibition. This is Oxaloacetate tautomerase FAHD2B, mitochondrial from Bos taurus (Bovine).